The chain runs to 247 residues: tRNA (guanine-N(1)-)-methyltransferase (247 aa).

S-adenosyl-L-methionine-binding positions include Gly-113 and 133 to 138 (IGDFVM).

Belongs to the RNA methyltransferase TrmD family. As to quaternary structure, homodimer.

The protein resides in the cytoplasm. The enzyme catalyses guanosine(37) in tRNA + S-adenosyl-L-methionine = N(1)-methylguanosine(37) in tRNA + S-adenosyl-L-homocysteine + H(+). Specifically methylates guanosine-37 in various tRNAs. In Vibrio cholerae serotype O1 (strain ATCC 39541 / Classical Ogawa 395 / O395), this protein is tRNA (guanine-N(1)-)-methyltransferase.